A 390-amino-acid chain; its full sequence is Leu/Ile/Val-binding protein homolog 6 (390 aa).

A signal peptide spans 1-21 (MKKIALTALAVFSLAASAAYA).

It belongs to the leucine-binding protein family.

Its function is as follows. Component of an amino-acid transport system. The polypeptide is Leu/Ile/Val-binding protein homolog 6 (Brucella suis biovar 1 (strain 1330)).